A 445-amino-acid chain; its full sequence is Phosphoglucosamine mutase (445 aa).

Residue S102 is the Phosphoserine intermediate of the active site. 4 residues coordinate Mg(2+): S102, D240, D242, and D244. S102 bears the Phosphoserine mark.

Belongs to the phosphohexose mutase family. It depends on Mg(2+) as a cofactor. Activated by phosphorylation.

It carries out the reaction alpha-D-glucosamine 1-phosphate = D-glucosamine 6-phosphate. Catalyzes the conversion of glucosamine-6-phosphate to glucosamine-1-phosphate. The chain is Phosphoglucosamine mutase from Mycobacterium ulcerans (strain Agy99).